Reading from the N-terminus, the 202-residue chain is MSRYRGPRLRITRRLGDLPGLTRKAAKRSYPPGQHGQARRKRSEYAIRLEEKQKLRFNYGVSERQLVRYVKKARAQEGSTGTNLLKLLENRLDNVCFRLGFGPTVPGARQLVNHGHVTVNGRVTDIASYQCKPGDVIAIRERKCSKQLAEGNLEFPGLANVPPHLELDKPKLNAKVVGRCEREWVALEINELLVVEYYSRKV.

The tract at residues 15 to 42 (LGDLPGLTRKAAKRSYPPGQHGQARRKR) is disordered. The region spanning 90–152 (NRLDNVCFRL…KCSKQLAEGN (63 aa)) is the S4 RNA-binding domain.

It belongs to the universal ribosomal protein uS4 family. As to quaternary structure, part of the 30S ribosomal subunit. Contacts protein S5. The interaction surface between S4 and S5 is involved in control of translational fidelity.

Its function is as follows. One of the primary rRNA binding proteins, it binds directly to 16S rRNA where it nucleates assembly of the body of the 30S subunit. With S5 and S12 plays an important role in translational accuracy. This Synechococcus sp. (strain WH7803) protein is Small ribosomal subunit protein uS4.